Reading from the N-terminus, the 84-residue chain is MERGRRKVRIGRVVSDKMDKTIVVAVEEFVRHPLYNKRVKRTKKFKAHDEKNICNIGDRVKIMETRPLSKDKRFRLVEVVEKVK.

It belongs to the universal ribosomal protein uS17 family. As to quaternary structure, part of the 30S ribosomal subunit.

In terms of biological role, one of the primary rRNA binding proteins, it binds specifically to the 5'-end of 16S ribosomal RNA. In Clostridioides difficile (strain 630) (Peptoclostridium difficile), this protein is Small ribosomal subunit protein uS17.